The chain runs to 442 residues: Trigger factor (442 aa).

One can recognise a PPIase FKBP-type domain in the interval 163–248; that stretch reads YDRVTINYCI…IIKIEKKQEL (86 aa).

The protein belongs to the FKBP-type PPIase family. Tig subfamily.

It is found in the cytoplasm. The catalysed reaction is [protein]-peptidylproline (omega=180) = [protein]-peptidylproline (omega=0). Functionally, involved in protein export. Acts as a chaperone by maintaining the newly synthesized protein in an open conformation. Functions as a peptidyl-prolyl cis-trans isomerase. This is Trigger factor from Buchnera aphidicola subsp. Acyrthosiphon pisum (strain Tuc7).